The following is a 293-amino-acid chain: Proline iminopeptidase (293 aa).

Residue S105 is the Nucleophile of the active site. Residue D244 is part of the active site. H271 serves as the catalytic Proton donor.

This sequence belongs to the peptidase S33 family. Part of the tricorn proteolytic complex.

It carries out the reaction Release of N-terminal proline from a peptide.. Its function is as follows. Cleaves H-Pro-AMC as well as a wide spectrum of amino acid substrates and several peptide substrates without a proline at the N-terminus. Proteases F1, F2 and F3 degrade oligopeptides produced by Tricorn (themselves probably produced by the proteasome) yielding free amino acids. This Thermoplasma acidophilum (strain ATCC 25905 / DSM 1728 / JCM 9062 / NBRC 15155 / AMRC-C165) protein is Proline iminopeptidase (pip).